Reading from the N-terminus, the 251-residue chain is Esterase mlcF (251 aa).

Residues Ser126, Asp193, and His221 each act as charge relay system in the active site.

This sequence belongs to the LovG family.

The enzyme catalyses dihydro-ML-236C-[compactin nonaketide synthase] + H2O = holo-[compactin nonaketide synthase] + dihydro-ML-236C carboxylate + H(+). It participates in polyketide biosynthesis. Its function is as follows. Esterase; part of the gene cluster that mediates the biosynthesis of compactin, also known as mevastatin or ML-236B, and which acts as a potent competitive inhibitor of HMG-CoA reductase. Compactin biosynthesis is performed in two stages. The first stage is catalyzed by the nonaketide synthase mlcA, which belongs to type I polyketide synthases and catalyzes the iterative nine-step formation of the polyketide. This PKS stage is completed by the action of dehydrogenase mlcG, which catalyzes the NADPH-dependent reduction of the unsaturated tetra-, penta- and heptaketide intermediates that arise during the mlcA-mediated biosynthesis of the nonaketide chain and leads to dihydro-ML-236C carboxylate. Covalently bound dihydro-ML-236C carboxylate is released from mlcA by the mlcF esterase. Conversion of dihydro-ML-236C carboxylate into ML-236A carboxylate is subsequently performed with the participation of molecular oxygen and P450 monoogygenase mlcC. Finally, mlcH performs the conversion of ML-236A carboxylate to ML-236B/compactin carboxylate through the addition of the side-chain diketide moiety produced by the diketide synthase mlcB. This is Esterase mlcF from Penicillium citrinum.